Reading from the N-terminus, the 550-residue chain is Probable acyl-activating enzyme 9 (550 aa).

It belongs to the ATP-dependent AMP-binding enzyme family. Expressed in leaves, flowers and developing seeds.

Its function is as follows. May act as an acid--thiol ligase that activates carboxylic acids by forming acyl-CoAs. The polypeptide is Probable acyl-activating enzyme 9 (AEE9) (Arabidopsis thaliana (Mouse-ear cress)).